Here is a 117-residue protein sequence, read N- to C-terminus: Hainantoxin-XV (117 aa).

Residues 1–20 form the signal peptide; sequence MKLCAVIIASLLVCVAVASS. The interval 20–55 is disordered; it reads SSDNQKEFAQEKEMTREETQSLGEHEKDDEVTGSEE. Positions 21–56 are excised as a propeptide; that stretch reads SDNQKEFAQEKEMTREETQSLGEHEKDDEVTGSEER. Residues 23-55 are compositionally biased toward basic and acidic residues; it reads NQKEFAQEKEMTREETQSLGEHEKDDEVTGSEE. Cystine bridges form between Cys58–Cys72, Cys65–Cys78, Cys69–Cys115, and Cys71–Cys91.

Belongs to the neurotoxin 03 (Tx2) family. 02 subfamily. HNTX-XV sub-subfamily. Expressed by the venom gland.

It localises to the secreted. Putative ion channel inhibitor. This chain is Hainantoxin-XV, found in Cyriopagopus hainanus (Chinese bird spider).